The following is a 1188-amino-acid chain: NF-X1-type zinc finger protein NFXL1 (1188 aa).

Basic and acidic residues predominate over residues 1–15 (MSFQVRRDRSDDRSH). Disordered regions lie at residues 1-52 (MSFQ…ETLD) and 65-195 (QHNA…VAKE). 2 stretches are compositionally biased toward polar residues: residues 19 to 34 (HQQT…SSVV) and 168 to 186 (ASGT…TRPV). Residues 223-279 (CMICYDKVGRSANIWSCSSCYSIFHINCIKRWARAPTSVDLLAEKNQGDNWRCPGCQ) form an RING-type; degenerate zinc finger. 9 NF-X1-type zinc fingers span residues 335-353 (CPHV…PCKA), 390-409 (CGRH…PCQV), 454-473 (CGNH…DCDL), 513-532 (CRLH…PCLV), 572-607 (CGRH…PCQK), 611-630 (CGQH…PCLE), 668-686 (CGHS…PCST), 721-751 (CGMH…TCRQ), and 760-781 (CRHT…RCEF). Positions 894–963 (PKWVLAVEER…KRFTVVHVTA (70 aa)) constitute an R3H domain. The disordered stretch occupies residues 1100-1188 (SDDSWGAEDS…VVDDWEKVCE (89 aa)). Polar residues-rich tracts occupy residues 1126–1138 (AKSN…SVNR) and 1159–1169 (EESSSSKTTGK).

The protein belongs to the NFX1 family. In terms of tissue distribution, expressed in seedlings, roots, stems, leaves, buds, flowers and siliques.

It localises to the nucleus. The protein operates within protein modification; protein ubiquitination. Functionally, mediates E2-dependent ubiquitination. Confers resistance to osmotic stress such as high salinity. Promotes H(2)O(2) production. Negative regulator of some defense-related genes via an salicylic acid (SA)-dependent signaling pathway. Confers susceptibility to the compatible phytopathogen Pseudomonas syringae pv. tomato strain DC3000 (Pst DC3000). Mediates resistance to type A trichothecenes (phytotoxins produced by phytopathogenic fungi). This Arabidopsis thaliana (Mouse-ear cress) protein is NF-X1-type zinc finger protein NFXL1 (NFXL1).